Here is a 123-residue protein sequence, read N- to C-terminus: Translation initiation factor 1A (123 aa).

Residues 1–11 (MSPDKTEDEDK) are compositionally biased toward acidic residues. A disordered region spans residues 1 to 26 (MSPDKTEDEDKDVNVDQDQFNEEEES). Residues 28–102 (GRVILPNKKK…EKADVVYRYT (75 aa)) enclose the S1-like domain.

It belongs to the eIF-1A family.

Functionally, seems to be required for maximal rate of protein biosynthesis. Enhances ribosome dissociation into subunits and stabilizes the binding of the initiator Met-tRNA(I) to 40 S ribosomal subunits. The chain is Translation initiation factor 1A (eIF1A) from Thermoplasma volcanium (strain ATCC 51530 / DSM 4299 / JCM 9571 / NBRC 15438 / GSS1).